A 152-amino-acid polypeptide reads, in one-letter code: Small ribosomal subunit protein uS15 (152 aa).

A compositionally biased stretch (basic residues) spans 1-16 (MARIHARRRGKSGSKR). The disordered stretch occupies residues 1–21 (MARIHARRRGKSGSKRIYRDS).

The protein belongs to the universal ribosomal protein uS15 family. Part of the 30S ribosomal subunit.

In Archaeoglobus fulgidus (strain ATCC 49558 / DSM 4304 / JCM 9628 / NBRC 100126 / VC-16), this protein is Small ribosomal subunit protein uS15.